The primary structure comprises 242 residues: Ubiquitin-conjugating enzyme E2 6 (242 aa).

The Cytoplasmic segment spans residues 1-217 (MASRQAYKRL…QPAGNGTTSN (217 aa)). Residues 5–163 (QAYKRLSKEY…FPELAEQNRR (159 aa)) form the UBC core domain. Cys87 (glycyl thioester intermediate) is an active-site residue. Residues 218 to 240 (SIGRSLLFVLFSLAALLVAVCYT) form a helical membrane-spanning segment.

The protein belongs to the ubiquitin-conjugating enzyme family.

The protein localises to the endoplasmic reticulum membrane. It catalyses the reaction S-ubiquitinyl-[E1 ubiquitin-activating enzyme]-L-cysteine + [E2 ubiquitin-conjugating enzyme]-L-cysteine = [E1 ubiquitin-activating enzyme]-L-cysteine + S-ubiquitinyl-[E2 ubiquitin-conjugating enzyme]-L-cysteine.. Its pathway is protein modification; protein ubiquitination. Functionally, catalyzes the covalent attachment of ubiquitin to other proteins. Functions in degradation of misfolded or regulated proteins localized in the endoplasmic reticulum (ER) lumen or membrane via the ubiquitin-proteasome system. Cognate E2 conjugating enzyme for the DOA10 ubiquitin ligase complex, which is part of the ERAD-C pathway responsible for the rapid degradation of membrane proteins with misfolded cytoplasmic domains. This Eremothecium gossypii (strain ATCC 10895 / CBS 109.51 / FGSC 9923 / NRRL Y-1056) (Yeast) protein is Ubiquitin-conjugating enzyme E2 6 (UBC6).